Reading from the N-terminus, the 455-residue chain is Argininosuccinate synthase (455 aa).

ATP contacts are provided by residues 17–25 and alanine 43; that span reads AFSGGLDTS. Residue tyrosine 99 participates in L-citrulline binding. Residues glycine 129 and threonine 131 each coordinate ATP. L-aspartate contacts are provided by threonine 131, asparagine 135, and aspartate 136. L-citrulline is bound at residue asparagine 135. Residue aspartate 136 coordinates ATP. Residues arginine 139 and serine 192 each coordinate L-citrulline. ATP is bound at residue aspartate 194. Threonine 201, glutamate 203, and glutamate 280 together coordinate L-citrulline. Polar residues predominate over residues 434–448; it reads TGLPQVDNNNLSSGR. The segment at 434–455 is disordered; the sequence is TGLPQVDNNNLSSGRGLQDKRQ.

It belongs to the argininosuccinate synthase family. Type 2 subfamily. In terms of assembly, homotetramer.

It is found in the cytoplasm. The catalysed reaction is L-citrulline + L-aspartate + ATP = 2-(N(omega)-L-arginino)succinate + AMP + diphosphate + H(+). It functions in the pathway amino-acid biosynthesis; L-arginine biosynthesis; L-arginine from L-ornithine and carbamoyl phosphate: step 2/3. This Yersinia pestis protein is Argininosuccinate synthase (argG).